We begin with the raw amino-acid sequence, 303 residues long: GTP cyclohydrolase FolE2 (303 aa).

Belongs to the GTP cyclohydrolase IV family.

It catalyses the reaction GTP + H2O = 7,8-dihydroneopterin 3'-triphosphate + formate + H(+). It functions in the pathway cofactor biosynthesis; 7,8-dihydroneopterin triphosphate biosynthesis; 7,8-dihydroneopterin triphosphate from GTP: step 1/1. In terms of biological role, converts GTP to 7,8-dihydroneopterin triphosphate. The polypeptide is GTP cyclohydrolase FolE2 (Exiguobacterium sp. (strain ATCC BAA-1283 / AT1b)).